Consider the following 710-residue polypeptide: uncharacterized protein (710 aa).

The tract at residues 1–20 (MKQRQARLIGTPSQTRRQQE) is disordered. Residues 13–42 (SQTRRQQELAEKLEKVKEVLEDEKKRQFNE) adopt a coiled-coil conformation.

It belongs to the IIV-6 268L family.

This is an uncharacterized protein from Invertebrate iridescent virus 6 (IIV-6).